Here is a 691-residue protein sequence, read N- to C-terminus: Elongation factor G (691 aa).

In terms of domain architecture, tr-type G spans 10-284 (KRLRNIGIAA…AVVDYLPSPL (275 aa)). GTP-binding positions include 19-26 (AHIDAGKT), 83-87 (DTPGH), and 137-140 (NKMD).

The protein belongs to the TRAFAC class translation factor GTPase superfamily. Classic translation factor GTPase family. EF-G/EF-2 subfamily.

Its subcellular location is the cytoplasm. Functionally, catalyzes the GTP-dependent ribosomal translocation step during translation elongation. During this step, the ribosome changes from the pre-translocational (PRE) to the post-translocational (POST) state as the newly formed A-site-bound peptidyl-tRNA and P-site-bound deacylated tRNA move to the P and E sites, respectively. Catalyzes the coordinated movement of the two tRNA molecules, the mRNA and conformational changes in the ribosome. In Thermus thermophilus (strain ATCC 27634 / DSM 579 / HB8), this protein is Elongation factor G (fusA).